We begin with the raw amino-acid sequence, 118 residues long: uncharacterized protein (118 aa).

The next 4 membrane-spanning stretches (helical) occupy residues 12–32 (IISL…FATF), 39–59 (LMPH…SLFI), 63–83 (IIGY…CPTI), and 98–118 (SAHL…VILF).

The protein localises to the cell membrane. This is an uncharacterized protein from Methanocaldococcus jannaschii (strain ATCC 43067 / DSM 2661 / JAL-1 / JCM 10045 / NBRC 100440) (Methanococcus jannaschii).